The following is a 290-amino-acid chain: MKNTFSRLFGFGDKESEFELQDESHEEIDKKVYEEIQEIPIVNITPNRYQPRTVFDDARIDELALTIRTHGLIQPIVVRQYEDDKYEIIAGERRFRAATKLGWEKVPAIIKNLNDTETASVALIENLQREELTAIEEAVAYQKLIELHNLTQEALAQRLGKGQSTIANKLRLLKLPEEIKSALLEKSITERHARALIPLKNEELQLKVLQEIVEKQLNVKQTEERIAKLLEEAKPKRKAKQKAVSRDTRIAMNTIRQSLQMVTESGLNVNSEEEEFDEYYQITIKIPKKK.

The segment at residues 153 to 172 (EALAQRLGKGQSTIANKLRL) is a DNA-binding region (H-T-H motif).

This sequence belongs to the ParB family.

The protein resides in the cytoplasm. It localises to the nucleoid. Functionally, effects nucleoid occlusion by binding relatively nonspecifically to DNA and preventing the assembly of the division machinery in the vicinity of the nucleoid, especially under conditions that disturb the cell cycle. It helps to coordinate cell division and chromosome segregation by preventing the formation of the Z ring through the nucleoid, which would cause chromosome breakage. This Bacillus cereus (strain G9842) protein is Nucleoid occlusion protein.